The following is a 195-amino-acid chain: Probable GTP-binding protein EngB (195 aa).

The EngB-type G domain occupies 22–195 (GRPEVALAGR…WAALLPFVAS (174 aa)). GTP is bound by residues 30–37 (GRSNVGKS), 57–61 (GKTQT), 75–78 (DVPG), 142–145 (TKAD), and 174–176 (FSA). Residues serine 37 and threonine 59 each contribute to the Mg(2+) site.

It belongs to the TRAFAC class TrmE-Era-EngA-EngB-Septin-like GTPase superfamily. EngB GTPase family. Requires Mg(2+) as cofactor.

Its function is as follows. Necessary for normal cell division and for the maintenance of normal septation. The polypeptide is Probable GTP-binding protein EngB (Geobacillus kaustophilus (strain HTA426)).